A 304-amino-acid polypeptide reads, in one-letter code: Proteasome subunit beta (304 aa).

The propeptide at 1–65 (MTWPHFEQLA…LTPTDAVPHG (65 aa)) is removed in mature form; by autocatalysis. The active-site Nucleophile is Thr-66.

The protein belongs to the peptidase T1B family. In terms of assembly, the 20S proteasome core is composed of 14 alpha and 14 beta subunits that assemble into four stacked heptameric rings, resulting in a barrel-shaped structure. The two inner rings, each composed of seven catalytic beta subunits, are sandwiched by two outer rings, each composed of seven alpha subunits. The catalytic chamber with the active sites is on the inside of the barrel. Has a gated structure, the ends of the cylinder being occluded by the N-termini of the alpha-subunits. Is capped by the proteasome-associated ATPase, ARC.

The protein resides in the cytoplasm. It catalyses the reaction Cleavage of peptide bonds with very broad specificity.. Its pathway is protein degradation; proteasomal Pup-dependent pathway. Its activity is regulated as follows. The formation of the proteasomal ATPase ARC-20S proteasome complex, likely via the docking of the C-termini of ARC into the intersubunit pockets in the alpha-rings, may trigger opening of the gate for substrate entry. Interconversion between the open-gate and close-gate conformations leads to a dynamic regulation of the 20S proteasome proteolysis activity. In terms of biological role, component of the proteasome core, a large protease complex with broad specificity involved in protein degradation. This chain is Proteasome subunit beta, found in Mycobacterium sp. (strain JLS).